Here is a 106-residue protein sequence, read N- to C-terminus: MTLDKTNRMNYLIDFYQELLTPKQRNYMSLYYLDDFSLGEIADEFEVSRQAVYDNIKRTEAMLEQYEERLGLFAKYEQRKLLLDQLKQLDLPSEAHVTIAALEQLE.

The protein belongs to the UPF0122 family.

Its function is as follows. Might take part in the signal recognition particle (SRP) pathway. This is inferred from the conservation of its genetic proximity to ftsY/ffh. May be a regulatory protein. The chain is UPF0122 protein Exig_1902 from Exiguobacterium sibiricum (strain DSM 17290 / CCUG 55495 / CIP 109462 / JCM 13490 / 255-15).